The sequence spans 228 residues: Prolactin-2A1 (228 aa).

The first 29 residues, 1–29, serve as a signal peptide directing secretion; that stretch reads MQLSITHPCCWTLRLLLVSNLLLWENVAL. Intrachain disulfides connect Cys-87–Cys-203 and Cys-220–Cys-228.

The protein belongs to the somatotropin/prolactin family. As to expression, expressed specifically in the placenta. Highly expressed in invasive trophoblast cells lining the central placental vessel.

It localises to the secreted. The polypeptide is Prolactin-2A1 (Prl2a1) (Rattus norvegicus (Rat)).